The following is a 439-amino-acid chain: Methylenetetrahydrofolate--tRNA-(uracil-5-)-methyltransferase TrmFO (439 aa).

8-13 (GAGLAG) is an FAD binding site.

The protein belongs to the MnmG family. TrmFO subfamily. FAD is required as a cofactor.

It is found in the cytoplasm. The catalysed reaction is uridine(54) in tRNA + (6R)-5,10-methylene-5,6,7,8-tetrahydrofolate + NADH + H(+) = 5-methyluridine(54) in tRNA + (6S)-5,6,7,8-tetrahydrofolate + NAD(+). The enzyme catalyses uridine(54) in tRNA + (6R)-5,10-methylene-5,6,7,8-tetrahydrofolate + NADPH + H(+) = 5-methyluridine(54) in tRNA + (6S)-5,6,7,8-tetrahydrofolate + NADP(+). Functionally, catalyzes the folate-dependent formation of 5-methyl-uridine at position 54 (M-5-U54) in all tRNAs. This chain is Methylenetetrahydrofolate--tRNA-(uracil-5-)-methyltransferase TrmFO, found in Lacticaseibacillus paracasei (strain ATCC 334 / BCRC 17002 / CCUG 31169 / CIP 107868 / KCTC 3260 / NRRL B-441) (Lactobacillus paracasei).